Consider the following 200-residue polypeptide: Putative peroxiredoxin sll0755 (200 aa).

Positions 5 to 163 (LRVGQPAPDF…TLRVLKAIRH (159 aa)) constitute a Thioredoxin domain. The active-site Cysteine sulfenic acid (-SOH) intermediate is cysteine 50.

Belongs to the peroxiredoxin family. AhpC/Prx1 subfamily. Homodimer; disulfide-linked, upon oxidation.

It localises to the cytoplasm. The catalysed reaction is a hydroperoxide + [thioredoxin]-dithiol = an alcohol + [thioredoxin]-disulfide + H2O. Thiol-specific peroxidase that catalyzes the reduction of hydrogen peroxide and organic hydroperoxides to water and alcohols, respectively. Plays a role in cell protection against oxidative stress by detoxifying peroxides. The sequence is that of Putative peroxiredoxin sll0755 from Synechocystis sp. (strain ATCC 27184 / PCC 6803 / Kazusa).